The primary structure comprises 274 residues: MTVLDDILAGVREDLAARKALTTLDELKERAHRQVPAKDAQGLLKPRDAEQRGVKVIAEVKRRSPSKGALATIPDPAALAEQYELGGATVISVLTEQRRFGGSLEDLRAVRCAVDVPVLRKDFVVDSYQLWEARAWGADVVLLIVAALEQEALVSLIERTRSLGMTALVEVHTAEEVARALDADARVVGVNNRNLKTLEVDNATFADLAPLIPDHVVRIAESGVSGPRDVVEFARAGADAVLVGETLVRGEDPRRAVADLVAAGAHPAVQAVRP.

It belongs to the TrpC family.

The enzyme catalyses 1-(2-carboxyphenylamino)-1-deoxy-D-ribulose 5-phosphate + H(+) = (1S,2R)-1-C-(indol-3-yl)glycerol 3-phosphate + CO2 + H2O. It participates in amino-acid biosynthesis; L-tryptophan biosynthesis; L-tryptophan from chorismate: step 4/5. This chain is Indole-3-glycerol phosphate synthase, found in Kineococcus radiotolerans (strain ATCC BAA-149 / DSM 14245 / SRS30216).